Consider the following 1413-residue polypeptide: DNA-directed RNA polymerase subunit beta' (1413 aa).

Zn(2+) contacts are provided by cysteine 70, cysteine 72, cysteine 85, and cysteine 88. Residues aspartate 460, aspartate 462, and aspartate 464 each coordinate Mg(2+). Residues cysteine 819, cysteine 893, cysteine 900, and cysteine 903 each contribute to the Zn(2+) site.

This sequence belongs to the RNA polymerase beta' chain family. As to quaternary structure, the RNAP catalytic core consists of 2 alpha, 1 beta, 1 beta' and 1 omega subunit. When a sigma factor is associated with the core the holoenzyme is formed, which can initiate transcription. The cofactor is Mg(2+). It depends on Zn(2+) as a cofactor.

The enzyme catalyses RNA(n) + a ribonucleoside 5'-triphosphate = RNA(n+1) + diphosphate. Its function is as follows. DNA-dependent RNA polymerase catalyzes the transcription of DNA into RNA using the four ribonucleoside triphosphates as substrates. The protein is DNA-directed RNA polymerase subunit beta' of Burkholderia multivorans (strain ATCC 17616 / 249).